We begin with the raw amino-acid sequence, 1826 residues long: 1,3-beta-glucan synthase component bgs3 (1826 aa).

Residues 34–43 show a composition bias toward polar residues; the sequence is QSNDQYNNIQ. Positions 34 to 90 are disordered; the sequence is QSNDQYNNIQHPAPSFANPFIHEQDDSYSDILEEEPDEDAYDSPERPSSTEEFISQD. Residues 59–75 are compositionally biased toward acidic residues; the sequence is DSYSDILEEEPDEDAYD. 7 helical membrane-spanning segments follow: residues 427–447, 465–485, 504–524, 543–563, 597–617, 637–657, and 660–680; these read IWIL…PTIY, WCAP…ALIL, LIFV…IFGF, FFFS…FLLG, AALW…FLTL, FMIG…LVYL, and LVLF…MFSI. A Phosphoserine modification is found at Ser885. Helical transmembrane passes span 1272–1292, 1329–1349, 1375–1397, 1417–1437, 1438–1458, 1531–1551, 1571–1591, 1607–1627, 1642–1662, 1701–1721, and 1770–1790; these read VFIM…GAMY, IISI…HDLL, VTQN…YIAT, GSSI…TMTV, WTTH…CPFI, IFTE…AYTF, IWIM…ILLM, YGAV…VFTF, VLGC…VVVF, CKVV…CILF, and SLLF…PLVL.

This sequence belongs to the glycosyltransferase 48 family. Component of the 1,3-beta-glucan synthase (GS) complex, composed of at least the alternate catalytic subunits bgs1, bgs2, bgs3, and bgs4, and a regulatory subunit chr4.

The protein resides in the membrane. It carries out the reaction [(1-&gt;3)-beta-D-glucosyl](n) + UDP-alpha-D-glucose = [(1-&gt;3)-beta-D-glucosyl](n+1) + UDP + H(+). Alternate catalytic subunit of the 1,3-beta-glucan synthase (GS) complex. Synthesizes 1,3-beta-glucan, a major structural component of the yeast cell wall. Required for cell wall biosynthesis and cell elongation. The protein is 1,3-beta-glucan synthase component bgs3 of Schizosaccharomyces pombe (strain 972 / ATCC 24843) (Fission yeast).